Here is a 120-residue protein sequence, read N- to C-terminus: Large ribosomal subunit protein bL12 (120 aa).

Belongs to the bacterial ribosomal protein bL12 family. In terms of assembly, homodimer. Part of the ribosomal stalk of the 50S ribosomal subunit. Forms a multimeric L10(L12)X complex, where L10 forms an elongated spine to which 2 to 4 L12 dimers bind in a sequential fashion. Binds GTP-bound translation factors.

In terms of biological role, forms part of the ribosomal stalk which helps the ribosome interact with GTP-bound translation factors. Is thus essential for accurate translation. The polypeptide is Large ribosomal subunit protein bL12 (Lactobacillus helveticus (strain DPC 4571)).